The chain runs to 260 residues: tRNA (guanine-N(1)-)-methyltransferase (260 aa).

Residues Gly-117 and 137–142 (LGDFVL) each bind S-adenosyl-L-methionine.

Belongs to the RNA methyltransferase TrmD family. As to quaternary structure, homodimer.

It localises to the cytoplasm. It catalyses the reaction guanosine(37) in tRNA + S-adenosyl-L-methionine = N(1)-methylguanosine(37) in tRNA + S-adenosyl-L-homocysteine + H(+). Functionally, specifically methylates guanosine-37 in various tRNAs. This Cupriavidus taiwanensis (strain DSM 17343 / BCRC 17206 / CCUG 44338 / CIP 107171 / LMG 19424 / R1) (Ralstonia taiwanensis (strain LMG 19424)) protein is tRNA (guanine-N(1)-)-methyltransferase.